The sequence spans 348 residues: D-alanine--D-alanine ligase (348 aa).

Residues 132–334 enclose the ATP-grasp domain; it reads KRVLESADIP…YAELIEELVR (203 aa). 162-217 is a binding site for ATP; that stretch reads EAVLSYPVFVKPANMGSSVGISKAESEEELRAAILLALTYDSRILIEQGVLAREIE. Positions 288, 301, and 303 each coordinate Mg(2+).

This sequence belongs to the D-alanine--D-alanine ligase family. The cofactor is Mg(2+). Mn(2+) serves as cofactor.

Its subcellular location is the cytoplasm. The enzyme catalyses 2 D-alanine + ATP = D-alanyl-D-alanine + ADP + phosphate + H(+). It functions in the pathway cell wall biogenesis; peptidoglycan biosynthesis. In terms of biological role, cell wall formation. The polypeptide is D-alanine--D-alanine ligase (Streptococcus equi subsp. zooepidemicus (strain MGCS10565)).